Consider the following 255-residue polypeptide: Ribosomal RNA small subunit methyltransferase G 2 (255 aa).

The S-adenosyl-L-methionine site is built by Gly-90, Phe-95, and Arg-155. The span at 233-245 (EDEGEELLMDELS) shows a compositional bias: acidic residues. A disordered region spans residues 233–255 (EDEGEELLMDELSNEEKRRWAKY). Positions 246-255 (NEEKRRWAKY) are enriched in basic and acidic residues.

It belongs to the methyltransferase superfamily. RNA methyltransferase RsmG family.

The protein localises to the cytoplasm. The catalysed reaction is guanosine(527) in 16S rRNA + S-adenosyl-L-methionine = N(7)-methylguanosine(527) in 16S rRNA + S-adenosyl-L-homocysteine. Its function is as follows. Specifically methylates the N7 position of guanine in position 527 of 16S rRNA. This chain is Ribosomal RNA small subunit methyltransferase G 2, found in Bdellovibrio bacteriovorus (strain ATCC 15356 / DSM 50701 / NCIMB 9529 / HD100).